A 434-amino-acid polypeptide reads, in one-letter code: [Arg8]-vasotocin receptor (434 aa).

Topologically, residues 1-27 (MGRIANQTTASNDTDPFGRNEEVAKME) are extracellular. N-linked (GlcNAc...) asparagine glycosylation is found at N6 and N12. The chain crosses the membrane as a helical span at residues 28-48 (ITVLSVTFFVAVIGNLSVLLA). Topologically, residues 49–67 (MHNTKKKSSRMHLFIKHLS) are cytoplasmic. The helical transmembrane segment at 68–88 (LADMVVAFFQVLPQLCWEITF) threads the bilayer. Over 89 to 98 (RFYGPDFLCR) the chain is Extracellular. Cysteines 97 and 176 form a disulfide. A helical membrane pass occupies residues 99 to 119 (IVKHLQVLGMFASTYMMVMMT). The Cytoplasmic segment spans residues 120–141 (LDRYIAICHPLKTLQQPTQRAY). The chain crosses the membrane as a helical span at residues 142–162 (IMIGSTWLCSLLLSTPQYFIF). The Extracellular portion of the chain corresponds to 163 to 191 (SLSEIQNGSYVYDCWGHFIEPWGIRAYIT). The helical transmembrane segment at 192–212 (WITVGIFLIPVIILMICYGFI) threads the bilayer. The Cytoplasmic segment spans residues 213 to 257 (CHSIWKNIKCKTMRGTRNTKDGMIGKVSVSSVTIISRAKLRTVKM). A helical membrane pass occupies residues 258–278 (TLVIVLAYIVCWAPFFIVQMW). Residues 279–295 (SVWDENFSWDDSENAAV) are Extracellular-facing. The helical transmembrane segment at 296–316 (TLSALLASLNSCCNPWIYMLF) threads the bilayer. Topologically, residues 317–434 (SGHLLYDFLR…KSSQCMSKES (118 aa)) are cytoplasmic.

Belongs to the G-protein coupled receptor 1 family. Vasopressin/oxytocin receptor subfamily. As to expression, expressed in pituitary, liver, gills, swim bladder and lateral line.

The protein resides in the cell membrane. Its function is as follows. Binds to vasotocin. Produces an induction of membrane chloride currents indicating that it is coupled to the inositol phosphate/calcium pathway. This chain is [Arg8]-vasotocin receptor, found in Catostomus commersonii (White sucker).